The chain runs to 325 residues: LIM and senescent cell antigen-like-containing domain protein 1 (325 aa).

Alanine 2 carries the post-translational modification N-acetylalanine. LIM zinc-binding domains lie at 10 to 62 (CERC…CEHD), 71 to 121 (CHQC…CRPC), 135 to 184 (CQKC…CLPC), 193 to 243 (CGAC…CETH), and 252 to 303 (CFHC…CKKC).

In terms of assembly, component of the heterotrimeric IPP (ILK-PINCH-PARVIN) complex composed of ILK, LIMS1/PINCH and PARVA; the complex binds to F-actin via the C-terminal tail of LIMS1 and the N-terminal region of PARVA, promoting F-actin filament bundling. Formation of the IPP complex is dependent on protein kinase C and precedes integrin-mediated cell adhesion and spreading. Competes with LIMS2 for interaction with ILK. Interacts (via LIM zinc-binding 5) with TGFB1I1. Interacts with SH3/SH2 adapter NCK2, thereby linking the complex to cell surface receptors. As to expression, expressed in most tissues except in the brain.

It is found in the cell junction. The protein resides in the focal adhesion. Its subcellular location is the cell membrane. Its function is as follows. Within the IPP (ILK-PINCH-PARVIN) complex, binds to F-actin, promoting F-actin bundling, a process required to generate force for actin cytoskeleton reorganization and subsequent dynamic cell adhesion events such as cell spreading and migration. The protein is LIM and senescent cell antigen-like-containing domain protein 1 (LIMS1) of Homo sapiens (Human).